The chain runs to 88 residues: Small ribosomal subunit protein uS17 (88 aa).

It belongs to the universal ribosomal protein uS17 family. As to quaternary structure, part of the 30S ribosomal subunit.

Functionally, one of the primary rRNA binding proteins, it binds specifically to the 5'-end of 16S ribosomal RNA. This is Small ribosomal subunit protein uS17 from Prochlorococcus marinus (strain MIT 9515).